Here is a 278-residue protein sequence, read N- to C-terminus: MDYILIGVILGIVQGISEWIPISSKTQVLIVSLSLLGLSFSVAYSFGLFMEIGTIAAAIIYFRREISGLLKALVRMSSRREDYLLLKFLVIVTIITGLMGVPLYLFVISLPILGLPMTVLGVVLLIDGIIIYLSRKNYIPRKGLHDLRLRDIIIVGIAQGLAALPGVSRSGITTSALILLGVKPEEAFKLSFISLIPAALGAIGVTVLFSKHEVSQAVHSVSLSGLLISIVVATFVSIFFINALLRFARTNKVVVLVIILGIIAIISGILSGIAKGFY.

Helical transmembrane passes span 3 to 23 (YILI…IPIS), 42 to 62 (VAYS…IIYF), 88 to 108 (FLVI…LFVI), 112 to 132 (ILGL…IIIY), 152 to 172 (IIIV…RSGI), 190 to 210 (LSFI…VLFS), 225 to 245 (GLLI…NALL), and 253 to 273 (VVVL…LSGI).

The protein belongs to the UppP family.

It localises to the cell membrane. It catalyses the reaction di-trans,octa-cis-undecaprenyl diphosphate + H2O = di-trans,octa-cis-undecaprenyl phosphate + phosphate + H(+). In terms of biological role, catalyzes the dephosphorylation of undecaprenyl diphosphate (UPP). The polypeptide is Undecaprenyl-diphosphatase (Saccharolobus islandicus (strain M.16.4 / Kamchatka #3) (Sulfolobus islandicus)).